A 336-amino-acid chain; its full sequence is Alpha-N-acetylgalactosaminide alpha-2,6-sialyltransferase 5 (336 aa).

Over 1 to 8 (MKTLMRHG) the chain is Cytoplasmic. Residues 9 to 29 (LAVCLVLTTMCTSLLLVYSSL) traverse the membrane as a helical; Signal-anchor for type II membrane protein segment. Residues 30 to 336 (GSQKERPPQQ…VNHAEGKPVF (307 aa)) are Lumenal-facing. Positions 34–76 (ERPPQQQQQQQQQQQQAATATGSTQLVESSPQPRRTAPAGPRQ) are disordered. Residues 38 to 49 (QQQQQQQQQQQQ) show a composition bias toward low complexity. Positions 50-66 (AATATGSTQLVESSPQP) are enriched in polar residues. Cysteine 96 and cysteine 245 form a disulfide bridge. N-linked (GlcNAc...) asparagine glycans are attached at residues asparagine 137 and asparagine 161.

This sequence belongs to the glycosyltransferase 29 family. As to expression, high expression in forebrain and to a lesser extent in cerebellum. No expression in salivary gland, intestine, liver, kidney, heart, lung, thymus and spleen.

Its subcellular location is the golgi apparatus membrane. It catalyses the reaction a ganglioside GM1b (d18:1(4E)) + CMP-N-acetyl-beta-neuraminate = a ganglioside GD1alpha (d18:1(4E)) + CMP + H(+). It carries out the reaction N-acetyl-alpha-neuraminosyl-(2-&gt;3)-beta-D-galactosyl-(1-&gt;3)-N-acetyl-beta-D-glucosaminyl-(1-&gt;3)-beta-D-galactosyl-(1-&gt;4)-beta-D-glucosyl-(1&lt;-&gt;1')-N-acyl-sphing-4-enine + CMP-N-acetyl-beta-neuraminate = N-acetyl-alpha-neuraminosyl-(2-&gt;3)-beta-D-galactosyl-(1-&gt;3)-[N-acetyl-alpha-neuraminosyl-(2-&gt;6)]-N-acetyl-beta-D-glucosaminyl-(1-&gt;3)-beta-D-galactosyl-(1-&gt;4)-beta-D-glucosyl-(1&lt;-&gt;1')-N-acyl-sphing-4-enine + CMP + H(+). Its pathway is glycolipid biosynthesis. Functionally, predominantly catalyzes the biosynthesis of ganglioside GD1alpha from GM1b in the brain, by transferring the sialyl group (N-acetyl-alpha-neuraminyl or NeuAc) from CMP-NeuAc to the GalNAc residue on the NeuAc-alpha-2,3-Gal-beta-1,3-GalNAc sequence of GM1b. GD1alpha is a critical molecule in the communication and interaction between neuronal cells and their supportive cells, particularly in brain tissues, and functions as an adhesion molecule in the process of metastasis. Also shows activity towards sialyl Lc4Cer (N-acetyl-alpha-neuraminosyl-(2-&gt;3)-beta-D-galactosyl-(1-&gt;3)-N-acetyl-beta-D-glucosaminyl-(1-&gt;3)-beta-D-galactosyl-(1-&gt;4)-beta-D-glucosyl-(1&lt;-&gt;1')-N-acyl-sphing-4-enine) generating disialyl Lc4Cer, which can lead to the synthesis of disialyl Lewis a (Le(a)), suggested to be a cancer-associated antigen. The polypeptide is Alpha-N-acetylgalactosaminide alpha-2,6-sialyltransferase 5 (St6galnac5) (Mus musculus (Mouse)).